Consider the following 687-residue polypeptide: Polyphosphate kinase (687 aa).

Residue N45 participates in ATP binding. Positions 375 and 405 each coordinate Mg(2+). H435 functions as the Phosphohistidine intermediate in the catalytic mechanism. Residues Y472, R568, and H596 each contribute to the ATP site.

This sequence belongs to the polyphosphate kinase 1 (PPK1) family. It depends on Mg(2+) as a cofactor. In terms of processing, an intermediate of this reaction is the autophosphorylated ppk in which a phosphate is covalently linked to a histidine residue through a N-P bond.

It catalyses the reaction [phosphate](n) + ATP = [phosphate](n+1) + ADP. Its function is as follows. Catalyzes the reversible transfer of the terminal phosphate of ATP to form a long-chain polyphosphate (polyP). The polypeptide is Polyphosphate kinase (Burkholderia lata (strain ATCC 17760 / DSM 23089 / LMG 22485 / NCIMB 9086 / R18194 / 383)).